The primary structure comprises 81 residues: Photosystem I iron-sulfur center (81 aa).

4Fe-4S ferredoxin-type domains follow at residues 2 to 31 (SHSV…MIPW) and 39 to 68 (IASA…VRVS). [4Fe-4S] cluster contacts are provided by Cys11, Cys14, Cys17, Cys21, Cys48, Cys51, Cys54, and Cys58.

In terms of assembly, the eukaryotic PSI reaction center is composed of at least 11 subunits. Requires [4Fe-4S] cluster as cofactor.

It is found in the plastid. The protein localises to the chloroplast thylakoid membrane. The enzyme catalyses reduced [plastocyanin] + hnu + oxidized [2Fe-2S]-[ferredoxin] = oxidized [plastocyanin] + reduced [2Fe-2S]-[ferredoxin]. Apoprotein for the two 4Fe-4S centers FA and FB of photosystem I (PSI); essential for photochemical activity. FB is the terminal electron acceptor of PSI, donating electrons to ferredoxin. The C-terminus interacts with PsaA/B/D and helps assemble the protein into the PSI complex. Required for binding of PsaD and PsaE to PSI. PSI is a plastocyanin-ferredoxin oxidoreductase, converting photonic excitation into a charge separation, which transfers an electron from the donor P700 chlorophyll pair to the spectroscopically characterized acceptors A0, A1, FX, FA and FB in turn. This chain is Photosystem I iron-sulfur center, found in Daucus carota (Wild carrot).